A 169-amino-acid chain; its full sequence is Photosystem I assembly protein Ycf3 (169 aa).

TPR repeat units follow at residues Ala-35 to Pro-68, Ser-72 to Leu-105, and Gly-120 to Asn-153.

The protein belongs to the Ycf3 family.

The protein localises to the plastid. It localises to the chloroplast thylakoid membrane. In terms of biological role, essential for the assembly of the photosystem I (PSI) complex. May act as a chaperone-like factor to guide the assembly of the PSI subunits. The chain is Photosystem I assembly protein Ycf3 from Staurastrum punctulatum (Green alga).